Consider the following 62-residue polypeptide: Photosystem II reaction center protein Z (62 aa).

Helical transmembrane passes span 8 to 28 and 41 to 61; these read AVFA…VVFA and FSGT…NSLI.

The protein belongs to the PsbZ family. PSII is composed of 1 copy each of membrane proteins PsbA, PsbB, PsbC, PsbD, PsbE, PsbF, PsbH, PsbI, PsbJ, PsbK, PsbL, PsbM, PsbT, PsbY, PsbZ, Psb30/Ycf12, at least 3 peripheral proteins of the oxygen-evolving complex and a large number of cofactors. It forms dimeric complexes.

Its subcellular location is the plastid. It localises to the chloroplast thylakoid membrane. Its function is as follows. May control the interaction of photosystem II (PSII) cores with the light-harvesting antenna, regulates electron flow through the 2 photosystem reaction centers. PSII is a light-driven water plastoquinone oxidoreductase, using light energy to abstract electrons from H(2)O, generating a proton gradient subsequently used for ATP formation. In Liriodendron tulipifera (Tuliptree), this protein is Photosystem II reaction center protein Z.